A 543-amino-acid chain; its full sequence is T-complex protein 1 subunit eta (543 aa).

Position 1 is an N-acetylmethionine (Met1). An ADP-binding site is contributed by Gly41. Residue Gly41 coordinates ATP. Position 67 is an N6-acetyllysine (Lys67). A Mg(2+)-binding site is contributed by Asp92. ADP contacts are provided by Gly93, Thr94, Thr95, Ser96, Ser164, and Ser165. Gly93 serves as a coordination point for ATP. Ser96 contributes to the ATP binding site. N6-acetyllysine occurs at positions 250 and 320. Residues Arg398 and Gly409 each contribute to the ATP site. Position 409 (Gly409) interacts with ADP. Residue Lys430 forms a Glycyl lysine isopeptide (Lys-Gly) (interchain with G-Cter in SUMO2) linkage. Residues Glu494 and Arg499 each coordinate ADP. An ATP-binding site is contributed by Arg499. Residues 524–543 form a disordered region; sequence RSTVDAPTAAGRGRGRGRPH. The residue at position 535 (Arg535) is an Omega-N-methylarginine.

This sequence belongs to the TCP-1 chaperonin family. As to quaternary structure, component of the chaperonin-containing T-complex (TRiC), a hexadecamer composed of two identical back-to-back stacked rings enclosing a protein folding chamber. Each ring is made up of eight different subunits: TCP1/CCT1, CCT2, CCT3, CCT4, CCT5, CCT6A/CCT6, CCT7, CCT8. Interacts with PACRG. Interacts with DLEC1.

It is found in the cytoplasm. The enzyme catalyses ATP + H2O = ADP + phosphate + H(+). In terms of biological role, component of the chaperonin-containing T-complex (TRiC), a molecular chaperone complex that assists the folding of actin, tubulin and other proteins upon ATP hydrolysis. The TRiC complex mediates the folding of WRAP53/TCAB1, thereby regulating telomere maintenance. This Homo sapiens (Human) protein is T-complex protein 1 subunit eta (CCT7).